The sequence spans 33 residues: Actin (33 aa).

The protein belongs to the actin family.

It is found in the cytoplasm. The protein localises to the cytoskeleton. It catalyses the reaction ATP + H2O = ADP + phosphate + H(+). Actins are highly conserved proteins that are involved in various types of cell motility and are ubiquitously expressed in all eukaryotic cells. The polypeptide is Actin (Dictyocaulus viviparus (Bovine lungworm)).